A 283-amino-acid chain; its full sequence is Pantothenate synthetase (283 aa).

30–37 contributes to the ATP binding site; that stretch reads MGNLHDGH. The active-site Proton donor is the H37. A (R)-pantoate-binding site is contributed by Q61. Beta-alanine is bound at residue Q61. 149–152 is a binding site for ATP; sequence GEKD. Q155 contributes to the (R)-pantoate binding site. 186-189 lines the ATP pocket; that stretch reads LSSR.

The protein belongs to the pantothenate synthetase family. In terms of assembly, homodimer.

The protein localises to the cytoplasm. It catalyses the reaction (R)-pantoate + beta-alanine + ATP = (R)-pantothenate + AMP + diphosphate + H(+). The protein operates within cofactor biosynthesis; (R)-pantothenate biosynthesis; (R)-pantothenate from (R)-pantoate and beta-alanine: step 1/1. Catalyzes the condensation of pantoate with beta-alanine in an ATP-dependent reaction via a pantoyl-adenylate intermediate. In Escherichia coli O127:H6 (strain E2348/69 / EPEC), this protein is Pantothenate synthetase.